Reading from the N-terminus, the 621-residue chain is uncharacterized protein (621 aa).

The protein belongs to the chlamydial CPn_0512/CT_425/TC_0708 family.

This is an uncharacterized protein from Chlamydia muridarum (strain MoPn / Nigg).